The following is a 299-amino-acid chain: MTEHKSGFVSIIGRPNVGKSTFVNRVIGHKIAIMSDKAQTTRNKIQGVMTRDDAQIIFIDTPGIHKPKHKLGDYMMKVAKNTLSEIDAIMFMVNANEEIGRGDEYIIEMLKNVKTPVFLVLNKIDLVHPDELMPKIEEYQSYMDFTEIVPISALDGLNVDHFIDVLKTYLPEGPKYYPDDQISDHPEQFVVGEIIREKILHLTSEEIPHAIGVNVDRMVKESEDRVHIEATIYVERDSQKGIVIGKGGKKLKEVGKRARRDIEMLLGSKVYLELWVKVQRDWRNKVNFIRQIGYVEDQD.

The region spanning Lys5 to Glu172 is the Era-type G domain. Residues Gly13 to Ser20 are G1. Residue Gly13–Ser20 participates in GTP binding. Positions Gln39 to Asn43 are G2. The segment at Asp60 to Gly63 is G3. GTP contacts are provided by residues Asp60 to Ile64 and Asn122 to Asp125. Positions Asn122–Asp125 are G4. A G5 region spans residues Ile151–Ala153. The 78-residue stretch at Thr203–Arg280 folds into the KH type-2 domain.

It belongs to the TRAFAC class TrmE-Era-EngA-EngB-Septin-like GTPase superfamily. Era GTPase family. Monomer.

It is found in the cytoplasm. The protein resides in the cell membrane. Functionally, an essential GTPase that binds both GDP and GTP, with rapid nucleotide exchange. Plays a role in 16S rRNA processing and 30S ribosomal subunit biogenesis and possibly also in cell cycle regulation and energy metabolism. The protein is GTPase Era of Staphylococcus aureus (strain bovine RF122 / ET3-1).